The following is a 93-amino-acid chain: Small ribosomal subunit protein uS19 (93 aa).

This sequence belongs to the universal ribosomal protein uS19 family.

Protein S19 forms a complex with S13 that binds strongly to the 16S ribosomal RNA. This chain is Small ribosomal subunit protein uS19, found in Thermoanaerobacter pseudethanolicus (strain ATCC 33223 / 39E) (Clostridium thermohydrosulfuricum).